A 380-amino-acid polypeptide reads, in one-letter code: Cytochrome b (380 aa).

Helical transmembrane passes span 33–53 (FGSLLGLCLIIQILTGLFLAM), 77–98 (WLIRYMHANGASMFFICLFLHV), 113–133 (WNMGIMLLFTVMATAFMGYVL), and 178–198 (FFAFHFILPFIITALVLVHLL). 2 residues coordinate heme b: His83 and His97. Heme b-binding residues include His182 and His196. His201 lines the a ubiquinone pocket. 4 consecutive transmembrane segments (helical) span residues 226-246 (IKDFLGILILLMASMILTLFF), 288-308 (LGGVLALILSILILAFMPLLH), 320-340 (ITQIMYWTLVADLLILTWIGG), and 347-367 (FITIGQTASIAYFAIILIFMP).

Belongs to the cytochrome b family. As to quaternary structure, the cytochrome bc1 complex contains 11 subunits: 3 respiratory subunits (MT-CYB, CYC1 and UQCRFS1), 2 core proteins (UQCRC1 and UQCRC2) and 6 low-molecular weight proteins (UQCRH/QCR6, UQCRB/QCR7, UQCRQ/QCR8, UQCR10/QCR9, UQCR11/QCR10 and a cleavage product of UQCRFS1). This cytochrome bc1 complex then forms a dimer. Requires heme b as cofactor.

The protein localises to the mitochondrion inner membrane. Component of the ubiquinol-cytochrome c reductase complex (complex III or cytochrome b-c1 complex) that is part of the mitochondrial respiratory chain. The b-c1 complex mediates electron transfer from ubiquinol to cytochrome c. Contributes to the generation of a proton gradient across the mitochondrial membrane that is then used for ATP synthesis. The protein is Cytochrome b (MT-CYB) of Microtus oregoni (Creeping vole).